Reading from the N-terminus, the 753-residue chain is Inactive protein-tyrosine phosphatase egg-4 (753 aa).

2 disordered regions span residues 26–46 (TSLQ…STDN) and 75–145 (SFRK…SGHG). Positions 35–46 (NTDDSSADSTDN) are enriched in low complexity. 2 stretches are compositionally biased toward basic and acidic residues: residues 84–94 (AQKDRRSKERL) and 129–145 (VSEK…SGHG). The region spanning 408–661 (MERRFEILEN…IFVHRLVAFF (254 aa)) is the Tyrosine-protein phosphatase domain.

The protein belongs to the protein-tyrosine phosphatase family. In terms of assembly, part of a complex, consisting of pseudophosphatases egg-3, egg-4, egg-5 and kinase mbk-2; this complex is required for the oocyte-to-zygote transition. Interacts (via tyrosine-protein phosphatase domain) with kinase mbk-2 (via 'Tyr-619' and 'Tyr-621'); mbk-2 tyrosine phosphorylation enhances the interaction. The interaction inhibits mbk-2 kinase activity and is required for mbk-2 oocyte cortex localization. Interacts with egg-3.

It is found in the cytoplasm. It localises to the cell cortex. In terms of biological role, inactive phosphatase which acts redundantly with egg-5 in the oocyte-to-zygote transition. Required for the polarization of cortical actin cytoskeleton rearrangement in the oocyte before and after fertilization. Together with egg-5, required for the cortical localization of kinase mbk-2 and for the inhibition of mbk-2 kinase activity in maturing oocyte until the end of meiosis I. Also required for kinase mbk-2, pseudophosphatase egg-3 and chitin synthase chs-1 localization to cytoplasmic foci after fertilization. The protein is Inactive protein-tyrosine phosphatase egg-4 of Caenorhabditis elegans.